A 367-amino-acid chain; its full sequence is Serine/threonine-protein kinase Sgk2 (367 aa).

Residues 1–28 (MASSPVGVPSPQPSRANGNINLGPSANP) form a disordered region. At Ser10 the chain carries Phosphoserine. Residues 15–28 (RANGNINLGPSANP) are compositionally biased toward polar residues. The 258-residue stretch at 35-292 (FDFLKVIGKG…FLDIKNHMFF (258 aa)) folds into the Protein kinase domain. ATP contacts are provided by residues 41–49 (IGKGNYGKV) and Lys64. The Nuclear localization signal motif lies at 68-78 (KKSILKNKEQN). Asp159 acts as the Proton acceptor in catalysis. Thr193 is modified (phosphothreonine; by PDPK1). The region spanning 293–367 (SPINWDDLYH…AQDDDDILDS (75 aa)) is the AGC-kinase C-terminal domain. Phosphoserine is present on residues Ser334 and Ser356. Tyr357 is subject to Phosphotyrosine.

Belongs to the protein kinase superfamily. AGC Ser/Thr protein kinase family. Activated by phosphorylation on Ser-356 by an unknown kinase (may be mTORC2 but not confirmed), transforming it into a substrate for PDPK1 which then phosphorylates it on Thr-193.

The protein resides in the cytoplasm. Its subcellular location is the nucleus. It carries out the reaction L-seryl-[protein] + ATP = O-phospho-L-seryl-[protein] + ADP + H(+). The enzyme catalyses L-threonyl-[protein] + ATP = O-phospho-L-threonyl-[protein] + ADP + H(+). Its activity is regulated as follows. Two specific sites, one in the kinase domain (Thr-193) and the other in the C-terminal regulatory region (Ser-356), need to be phosphorylated for its full activation. Its function is as follows. Serine/threonine-protein kinase which is involved in the regulation of a wide variety of ion channels, membrane transporters, cell growth, survival and proliferation. Up-regulates Na(+) channels: SCNN1A/ENAC, K(+) channels: KCNA3/Kv1.3, KCNE1 and KCNQ1, amino acid transporter: SLC6A19, glutamate transporter: SLC1A6/EAAT4, glutamate receptors: GRIA1/GLUR1 and GRIK2/GLUR6, Na(+)/H(+) exchanger: SLC9A3/NHE3, and the Na(+)/K(+) ATPase. In Mus musculus (Mouse), this protein is Serine/threonine-protein kinase Sgk2 (Sgk2).